Reading from the N-terminus, the 104-residue chain is Circadian clock oscillator protein KaiB (104 aa).

Belongs to the KaiB family. In terms of assembly, the KaiABC complex composition changes during the circadian cycle to control KaiC phosphorylation. Complexes KaiC(6), KaiA(2-4):KaiC(6), KaiB(6):KaiC(6) and KaiC(6):KaiB(6):KaiA(12) are among the most important forms, many form cooperatively. Undergoes a major conformational rearrangment; in the free state forms homotetramers as a dimer of dimers. When bound to the CI domain of KaiC switches to a monomeric thioredoxin-fold (KaiB(fs)). KaiB(fs) binds CikA, leading it to dephosphorylate phospho-RpaA.

Its function is as follows. Key component of the KaiABC oscillator complex, which constitutes the main circadian regulator in cyanobacteria. Complex composition changes during the circadian cycle to control KaiC phosphorylation. KaiA stimulates KaiC autophosphorylation, while KaiB sequesters KaiA, leading to KaiC autodephosphorylation. Phospho-Ser-431 KaiC accumulation triggers binding of KaiB to form the KaiB(6):KaiC(6) complex, leading to changes in output regulators CikA and SasA. KaiB switches to a thioredoxin-like fold (KaiB(fs)) when bound to KaiC. KaiB(6):KaiC(6) formation exposes a site for KaiA binding that sequesters KaiA from KaiC, making the KaiC(6):KaiB(6):KaiA(12) complex that results in KaiC autodephosphorylation. Functionally, a metamorphic protein which reversibly switches between an inactive tetrameric fold and a rare, thioredoxin-like monomeric fold (KaiB(fs)). KaiB(fs) binds phospho-KaiC, KaiA and CikA. KaiA and CikA compete for binding to KaiB(fs), and KaiB(fs) and SasA compete for binding to KaiC, thus the clock oscillator and output signal pathway are tightly coupled. This Microcystis aeruginosa (strain NIES-843 / IAM M-2473) protein is Circadian clock oscillator protein KaiB.